The primary structure comprises 704 residues: Elongation factor G (704 aa).

A tr-type G domain is found at 10–290 (TKVRNIGIMA…AVVDYLPSPL (281 aa)). GTP-binding positions include 19–26 (AHIDAGKT), 83–87 (DTPGH), and 137–140 (NKMD).

It belongs to the TRAFAC class translation factor GTPase superfamily. Classic translation factor GTPase family. EF-G/EF-2 subfamily.

The protein localises to the cytoplasm. Functionally, catalyzes the GTP-dependent ribosomal translocation step during translation elongation. During this step, the ribosome changes from the pre-translocational (PRE) to the post-translocational (POST) state as the newly formed A-site-bound peptidyl-tRNA and P-site-bound deacylated tRNA move to the P and E sites, respectively. Catalyzes the coordinated movement of the two tRNA molecules, the mRNA and conformational changes in the ribosome. This is Elongation factor G from Beutenbergia cavernae (strain ATCC BAA-8 / DSM 12333 / CCUG 43141 / JCM 11478 / NBRC 16432 / NCIMB 13614 / HKI 0122).